The primary structure comprises 413 residues: Tyrosine--tRNA ligase (413 aa).

Residues 59 to 68 (PTAPDIHLGH) carry the 'HIGH' region motif. A 'KMSKS' region motif is present at residues 243–247 (KMSKS). Lys-246 is an ATP binding site. The 61-residue stretch at 351-411 (LAIGQLLKQA…GKRRFARVTL (61 aa)) folds into the S4 RNA-binding domain.

It belongs to the class-I aminoacyl-tRNA synthetase family. TyrS type 2 subfamily. As to quaternary structure, homodimer.

The protein resides in the cytoplasm. It catalyses the reaction tRNA(Tyr) + L-tyrosine + ATP = L-tyrosyl-tRNA(Tyr) + AMP + diphosphate + H(+). Catalyzes the attachment of tyrosine to tRNA(Tyr) in a two-step reaction: tyrosine is first activated by ATP to form Tyr-AMP and then transferred to the acceptor end of tRNA(Tyr). This is Tyrosine--tRNA ligase from Burkholderia pseudomallei (strain K96243).